We begin with the raw amino-acid sequence, 36 residues long: Kappa-isophellitoxin-Tst1a (36 aa).

Positions 2–36 constitute a ShKT domain; sequence CENNFSDRECERRKKDCDSSMKFRELSCPKTCGTC. Intrachain disulfides connect C2/C36, C11/C29, and C18/C33.

The protein belongs to the sea anemone type 1 potassium channel toxin family. Type 1a subfamily. In terms of tissue distribution, predominantly expressed in mesenterial filaments (at protein level), a morphological structure that has a functional role in prey killing and digestion. Also expressed in club-tips, tentacles, actinopharynx, body column, mesenterial filaments and pedal disk.

It is found in the secreted. The protein localises to the nematocyst. Its function is as follows. Probable toxin with unknown function. Does not inhibit all channels tested. Is not cytotoxic on macrophage. This is Kappa-isophellitoxin-Tst1a from Telmatactis stephensoni (Sea anemone).